The chain runs to 199 residues: Pectinesterase inhibitor 4 (199 aa).

The N-terminal stretch at 1–25 (MLRFVVLSLTLMVFINSSNFPKTAA) is a signal peptide. N16, N33, N43, and N83 each carry an N-linked (GlcNAc...) asparagine glycan. An intrachain disulfide couples C42 to C51. C109 and C158 are disulfide-bonded.

This sequence belongs to the PMEI family. In terms of assembly, binds reversibly to PME3 to inhibit its activity; the stability of the PME3-PMEI4 complex and the inhibition of the pectin methylesterase (PME) activity is pH-dependent, based on protonation status of amino-acids at the complex interface. As to expression, expressed in outer cell layer of roots, particularly in the root-hair zone. Expressed in roots and siliques.

Its subcellular location is the secreted. It is found in the extracellular space. The protein resides in the apoplast. Its function is as follows. Pectin methylesterase (PME) inhibitor that can target the root-expressed PME17 and PME3 in a pH-dependent manner, mainly in slightly acidic conditions (pH 6.3 and 5.0) but not at pH 7.5; this processus relies on changes in the protonation of amino acids involved in intermolecular and intramolecular interactions. Regulate de-methylesterification of pectins in roots and affects root growth. This is Pectinesterase inhibitor 4 from Arabidopsis thaliana (Mouse-ear cress).